The following is a 95-amino-acid chain: Probable FAD-linked sulfhydryl oxidase OPG072 (95 aa).

The Intravirion portion of the chain corresponds to 1-8 (MNPKHWGR). One can recognise an ERV/ALR sulfhydryl oxidase domain in the interval 1–95 (MNPKHWGRAV…AIDVTKVNPL (95 aa)). Residues 9–25 (AVWTIIFIVLSQAGLDG) traverse the membrane as a helical segment. The Virion surface portion of the chain corresponds to 26 to 95 (NIEACKRKLY…AIDVTKVNPL (70 aa)). A disulfide bridge connects residues C43 and C46.

It belongs to the orthopoxvirus OPG072 family. As to quaternary structure, interacts with OPG128/A2.5; this interaction involves formation of a transient disulfide-bonded intermediate, allowing disulfide bond transfer. Requires FAD as cofactor.

The protein resides in the virion membrane. The protein localises to the host cytoplasm. The catalysed reaction is 2 R'C(R)SH + O2 = R'C(R)S-S(R)CR' + H2O2. Its function is as follows. FAD-dependent sulfhydryl oxidase that catalyzes disulfide bond formation. The complete pathway for formation of disulfide bonds in intracellular virion membrane proteins sequentially involves thiol-disulfide transfer between OPG072/E10, OPG128/A2.5 and OPG088/G4. The protein is Probable FAD-linked sulfhydryl oxidase OPG072 (OPG072) of Bos taurus (Bovine).